We begin with the raw amino-acid sequence, 122 residues long: uncharacterized protein (122 aa).

An N-terminal signal peptide occupies residues 1–18 (MYSMAFLASSGLVANSSA). N-linked (GlcNAc...) asparagine glycosylation occurs at N15.

This is an uncharacterized protein from Saccharomyces cerevisiae (strain ATCC 204508 / S288c) (Baker's yeast).